A 311-amino-acid chain; its full sequence is GTP cyclohydrolase FolE2 (311 aa).

It belongs to the GTP cyclohydrolase IV family.

It catalyses the reaction GTP + H2O = 7,8-dihydroneopterin 3'-triphosphate + formate + H(+). It functions in the pathway cofactor biosynthesis; 7,8-dihydroneopterin triphosphate biosynthesis; 7,8-dihydroneopterin triphosphate from GTP: step 1/1. Converts GTP to 7,8-dihydroneopterin triphosphate. This Hydrogenovibrio crunogenus (strain DSM 25203 / XCL-2) (Thiomicrospira crunogena) protein is GTP cyclohydrolase FolE2.